Consider the following 696-residue polypeptide: Glycine--tRNA ligase beta subunit (696 aa).

It belongs to the class-II aminoacyl-tRNA synthetase family. Tetramer of two alpha and two beta subunits.

It localises to the cytoplasm. It carries out the reaction tRNA(Gly) + glycine + ATP = glycyl-tRNA(Gly) + AMP + diphosphate. This is Glycine--tRNA ligase beta subunit from Nitratidesulfovibrio vulgaris (strain ATCC 29579 / DSM 644 / CCUG 34227 / NCIMB 8303 / VKM B-1760 / Hildenborough) (Desulfovibrio vulgaris).